The primary structure comprises 196 residues: MNEAVSPGALSTLFTDARTHNGWREPPVSDETLREIYAQMKWGPTSANCSPARIVFIRTAEGKERLRPALSSGNLQKTLTAPVTAIVAWDSEFYERLPQLFPHGDARSWFTSSPQLAEETAFRNSSMQAAYLIVACRALGLDTGPMSGFDRQYVDDAFFAGSTLKSNLLINIGYGDSSKLFARLPRLSFEEACGLL.

This sequence belongs to the nitroreductase family. HadB/RutE subfamily. Requires FMN as cofactor.

It catalyses the reaction 3-hydroxypropanoate + NADP(+) = 3-oxopropanoate + NADPH + H(+). May reduce toxic product malonic semialdehyde to 3-hydroxypropionic acid, which is excreted. This is Probable malonic semialdehyde reductase RutE from Escherichia coli O81 (strain ED1a).